Reading from the N-terminus, the 192-residue chain is Glycerol-3-phosphate acyltransferase (192 aa).

5 consecutive transmembrane segments (helical) span residues 4 to 24, 54 to 74, 80 to 100, 112 to 132, and 154 to 174; these read MFWL…AILL, LAVL…VLAG, PSQQ…PLYF, AGVL…AWLL, and LLAW…LLIV.

Belongs to the PlsY family. Probably interacts with PlsX.

The protein resides in the cell inner membrane. It catalyses the reaction an acyl phosphate + sn-glycerol 3-phosphate = a 1-acyl-sn-glycero-3-phosphate + phosphate. It participates in lipid metabolism; phospholipid metabolism. Functionally, catalyzes the transfer of an acyl group from acyl-phosphate (acyl-PO(4)) to glycerol-3-phosphate (G3P) to form lysophosphatidic acid (LPA). This enzyme utilizes acyl-phosphate as fatty acyl donor, but not acyl-CoA or acyl-ACP. This is Glycerol-3-phosphate acyltransferase from Pseudomonas syringae pv. tomato (strain ATCC BAA-871 / DC3000).